The chain runs to 227 residues: Ribose-5-phosphate isomerase A (227 aa).

Substrate-binding positions include 26–29 (TGST), 82–85 (DGAD), and 95–98 (KGGG). Glu-104 serves as the catalytic Proton acceptor. Lys-122 contacts substrate.

Belongs to the ribose 5-phosphate isomerase family. Homodimer.

The catalysed reaction is aldehydo-D-ribose 5-phosphate = D-ribulose 5-phosphate. Its pathway is carbohydrate degradation; pentose phosphate pathway; D-ribose 5-phosphate from D-ribulose 5-phosphate (non-oxidative stage): step 1/1. Functionally, catalyzes the reversible conversion of ribose-5-phosphate to ribulose 5-phosphate. The chain is Ribose-5-phosphate isomerase A from Streptococcus pyogenes serotype M28 (strain MGAS6180).